A 256-amino-acid chain; its full sequence is Type III pantothenate kinase (256 aa).

6–13 serves as a coordination point for ATP; that stretch reads DVGNTNTV. Residues tyrosine 100 and 107 to 110 contribute to the substrate site; that span reads GADR. Catalysis depends on aspartate 109, which acts as the Proton acceptor. Residue aspartate 129 coordinates K(+). Position 132 (threonine 132) interacts with ATP. Residue threonine 184 participates in substrate binding.

Belongs to the type III pantothenate kinase family. As to quaternary structure, homodimer. NH4(+) is required as a cofactor. It depends on K(+) as a cofactor.

Its subcellular location is the cytoplasm. It catalyses the reaction (R)-pantothenate + ATP = (R)-4'-phosphopantothenate + ADP + H(+). Its pathway is cofactor biosynthesis; coenzyme A biosynthesis; CoA from (R)-pantothenate: step 1/5. Functionally, catalyzes the phosphorylation of pantothenate (Pan), the first step in CoA biosynthesis. In Myxococcus xanthus (strain DK1622), this protein is Type III pantothenate kinase.